The sequence spans 217 residues: uncharacterized protein (217 aa).

This is an uncharacterized protein from Haemophilus influenzae (strain ATCC 51907 / DSM 11121 / KW20 / Rd).